We begin with the raw amino-acid sequence, 451 residues long: V-type proton ATPase subunit S1 (451 aa).

An N-terminal signal peptide occupies residues 1-16 (MRVLFAVFSLIMACQA). Over 17-407 (YDAVLFSNSR…DCTGTFSSGS (391 aa)) the chain is Lumenal. N-linked (GlcNAc...) asparagine glycans are attached at residues asparagine 191, asparagine 235, asparagine 249, and asparagine 330. A helical membrane pass occupies residues 408 to 428 (WMGIVSALVLIAGLMFGYVML). At 429 to 451 (QSVQTMDRFDDPKQRQIVINVRE) the chain is on the cytoplasmic side.

It belongs to the vacuolar ATPase subunit S1 family. In terms of assembly, accessory component of the multisubunit proton-transporting vacuolar (V)-ATPase protein pump. As to expression, expressed in pharynx, hypodermis, intestine, vulval hypodermis and the H-shape excretory cell.

It is found in the membrane. In terms of biological role, accessory subunit of the proton-transporting vacuolar (V)-ATPase protein pump, which is required for luminal acidification of secretory vesicles. In the germline, required for the trafficking of the receptor RME-2 to the oocyte cell membrane where it regulates the uptake of yolk proteins. Also, plays an essential role in osmoregulation in the embryo, probably by regulating the proper formation of the eggshell. In Caenorhabditis elegans, this protein is V-type proton ATPase subunit S1.